The primary structure comprises 464 residues: Cysteine--tRNA ligase (464 aa).

Residue C29 participates in Zn(2+) binding. The 'HIGH' region signature appears at 31-41; that stretch reads PTVYDFAHIGN. Positions 224, 249, and 253 each coordinate Zn(2+). Residues 282-286 carry the 'KMSKS' region motif; it reads KMSKS. K285 serves as a coordination point for ATP.

This sequence belongs to the class-I aminoacyl-tRNA synthetase family. In terms of assembly, monomer. Requires Zn(2+) as cofactor.

It is found in the cytoplasm. The enzyme catalyses tRNA(Cys) + L-cysteine + ATP = L-cysteinyl-tRNA(Cys) + AMP + diphosphate. In Afipia carboxidovorans (strain ATCC 49405 / DSM 1227 / KCTC 32145 / OM5) (Oligotropha carboxidovorans), this protein is Cysteine--tRNA ligase.